We begin with the raw amino-acid sequence, 180 residues long: Large ribosomal subunit protein uL5 (180 aa).

The protein belongs to the universal ribosomal protein uL5 family. Part of the 50S ribosomal subunit; part of the 5S rRNA/L5/L18/L25 subcomplex. Contacts the 5S rRNA and the P site tRNA. Forms a bridge to the 30S subunit in the 70S ribosome.

In terms of biological role, this is one of the proteins that bind and probably mediate the attachment of the 5S RNA into the large ribosomal subunit, where it forms part of the central protuberance. In the 70S ribosome it contacts protein S13 of the 30S subunit (bridge B1b), connecting the 2 subunits; this bridge is implicated in subunit movement. Contacts the P site tRNA; the 5S rRNA and some of its associated proteins might help stabilize positioning of ribosome-bound tRNAs. The chain is Large ribosomal subunit protein uL5 from Clostridium botulinum (strain ATCC 19397 / Type A).